The primary structure comprises 114 residues: U17-barytoxin-Tl1d (114 aa).

The first 20 residues, 1–20 (MKTIIVFLSLLVLATKFGDA), serve as a signal peptide directing secretion. The propeptide occupies 21-74 (NEGVNQEQMKEVIQNEFREDFLNEMAAMSLLQQLEAIESTLLEKEADRNSRQKR). 3 disulfide bridges follow: cysteine 75–cysteine 88, cysteine 82–cysteine 93, and cysteine 87–cysteine 108.

The protein belongs to the neurotoxin 14 (magi-1) family. 03 (ICK-30-40) subfamily. In terms of tissue distribution, expressed by the venom gland.

The protein localises to the secreted. In terms of biological role, ion channel inhibitor. In Trittame loki (Brush-footed trapdoor spider), this protein is U17-barytoxin-Tl1d.